The chain runs to 202 residues: Peptidyl-tRNA hydrolase (202 aa).

Tyrosine 14 lines the tRNA pocket. The active-site Proton acceptor is the histidine 19. The tRNA site is built by tyrosine 64, asparagine 66, and asparagine 112.

Belongs to the PTH family. In terms of assembly, monomer.

The protein localises to the cytoplasm. The catalysed reaction is an N-acyl-L-alpha-aminoacyl-tRNA + H2O = an N-acyl-L-amino acid + a tRNA + H(+). Functionally, hydrolyzes ribosome-free peptidyl-tRNAs (with 1 or more amino acids incorporated), which drop off the ribosome during protein synthesis, or as a result of ribosome stalling. Its function is as follows. Catalyzes the release of premature peptidyl moieties from peptidyl-tRNA molecules trapped in stalled 50S ribosomal subunits, and thus maintains levels of free tRNAs and 50S ribosomes. This Nitrobacter winogradskyi (strain ATCC 25391 / DSM 10237 / CIP 104748 / NCIMB 11846 / Nb-255) protein is Peptidyl-tRNA hydrolase.